The following is a 217-amino-acid chain: 3,4-dihydroxy-2-butanone 4-phosphate synthase (217 aa).

Residues 37–38 (RE), Asp-42, 150–154 (RRGHT), and Glu-174 each bind D-ribulose 5-phosphate. Glu-38 contacts Mg(2+). His-153 is a binding site for Mg(2+).

This sequence belongs to the DHBP synthase family. In terms of assembly, homodimer. The cofactor is Mg(2+). Mn(2+) is required as a cofactor.

It catalyses the reaction D-ribulose 5-phosphate = (2S)-2-hydroxy-3-oxobutyl phosphate + formate + H(+). It participates in cofactor biosynthesis; riboflavin biosynthesis; 2-hydroxy-3-oxobutyl phosphate from D-ribulose 5-phosphate: step 1/1. Its function is as follows. Catalyzes the conversion of D-ribulose 5-phosphate to formate and 3,4-dihydroxy-2-butanone 4-phosphate. The chain is 3,4-dihydroxy-2-butanone 4-phosphate synthase from Shewanella sp. (strain W3-18-1).